The primary structure comprises 156 residues: Cyanate hydratase (156 aa).

Catalysis depends on residues Arg-96, Glu-99, and Ser-122.

This sequence belongs to the cyanase family.

It catalyses the reaction cyanate + hydrogencarbonate + 3 H(+) = NH4(+) + 2 CO2. Catalyzes the reaction of cyanate with bicarbonate to produce ammonia and carbon dioxide. This is Cyanate hydratase from Burkholderia ambifaria (strain MC40-6).